A 142-amino-acid polypeptide reads, in one-letter code: Gonadotropin subunit beta-2 (142 aa).

The first 23 residues, Met-1–Gly-23, serve as a signal peptide directing secretion. Cystine bridges form between Cys-29–Cys-77, Cys-43–Cys-92, Cys-46–Cys-130, Cys-54–Cys-108, Cys-58–Cys-110, and Cys-113–Cys-120. The N-linked (GlcNAc...) asparagine glycan is linked to Asn-33.

Belongs to the glycoprotein hormones subunit beta family. In terms of assembly, heterodimer of an alpha and a beta chain.

Its subcellular location is the secreted. In terms of biological role, involved in gametogenesis and steroidogenesis. This Oncorhynchus keta (Chum salmon) protein is Gonadotropin subunit beta-2 (cgbb).